Here is a 484-residue protein sequence, read N- to C-terminus: Glutamate--tRNA ligase (484 aa).

The 'HIGH' region signature appears at Pro-11 to Asn-21. The 'KMSKS' region motif lies at Lys-252–Arg-256. Residue Lys-255 participates in ATP binding.

This sequence belongs to the class-I aminoacyl-tRNA synthetase family. Glutamate--tRNA ligase type 1 subfamily. In terms of assembly, monomer.

It is found in the cytoplasm. The enzyme catalyses tRNA(Glu) + L-glutamate + ATP = L-glutamyl-tRNA(Glu) + AMP + diphosphate. Functionally, catalyzes the attachment of glutamate to tRNA(Glu) in a two-step reaction: glutamate is first activated by ATP to form Glu-AMP and then transferred to the acceptor end of tRNA(Glu). The chain is Glutamate--tRNA ligase from Staphylococcus epidermidis (strain ATCC 35984 / DSM 28319 / BCRC 17069 / CCUG 31568 / BM 3577 / RP62A).